The sequence spans 434 residues: MSILKIFAREIFDSRGNPTVEVDLYTSKGLFRAAVPSGASTGIYEALELRDNDKTRFLGKGVSKAVGHVNKTIAPALISKNINVVEQEKIDKLMLEMDGSENKSKFGANAILGVSLAVCKAGAAEKGVPLYRHIADLAGNPEVILPVPAFNVINGGSHAGNKLAMQEFMILPVGAESFKEAMRIGAEVYHNLKNVIKEKYGKDATNVGDEGGFAPNILEDKEALELLKTAISKAGYTDKVVIGMDVAASEFYRDGKYDLDFKSPDDPSRYITPDQLADLYKSFIKSYPLVSVEDPFDQDDWSAWKKFTATVGVQVVGDDLTVTNPKRIAKPVEEKSCNCLLLQVNQIGSVTESLQACKLAQSNGWGVMVSHRSGETEDTFIADLVVGLCTGQIKTGAPCRSERLAKYNQLLRIEEELGSKARFAGRNFRNPRIN.

A Mg(2+)-binding site is contributed by serine 40. Histidine 158 and glutamate 167 together coordinate substrate. Glutamate 210 (proton donor) is an active-site residue. Mg(2+) is bound by residues aspartate 245, glutamate 293, and aspartate 318. Residues glutamate 293, aspartate 318, 370–373, and lysine 394 contribute to the substrate site; that span reads SHRS.

The protein belongs to the enolase family. In terms of assembly, homodimer. The cofactor is Mg(2+).

The protein localises to the cytoplasm. It carries out the reaction (2R)-2-phosphoglycerate = phosphoenolpyruvate + H2O. Its pathway is carbohydrate degradation; glycolysis; pyruvate from D-glyceraldehyde 3-phosphate: step 4/5. The chain is Alpha-enolase from Trachemys scripta elegans (Red-eared slider turtle).